The following is a 1193-amino-acid chain: Protein diaphanous homolog 3 (1193 aa).

The span at 1 to 10 (MERHQPRLHH) shows a compositional bias: basic residues. The tract at residues 1 to 57 (MERHQPRLHHPAQGSAAGTPYPSSASLRGCRESKMPRRKGPQHPPPPSGPEEPGEKR) is disordered. S26 carries the post-translational modification Phosphoserine. The Nuclear localization signal motif lies at 36-60 (PRRKGPQHPPPPSGPEEPGEKRPKF). T68 carries the post-translational modification Phosphothreonine. Phosphoserine is present on residues S77 and S175. The region spanning 114-476 (PKPLSENELL…QIVLHRDGMD (363 aa)) is the GBD/FH3 domain. Positions 497-554 (IDQAKLEEFEEKASELYKKFEKEFTDHQETQAELQKKEAKINELQAELQAFKSQFGAL) form a coiled coil. Positions 558–622 (CNIPLPPSKE…PPPLGFLGGQ (65 aa)) are disordered. The FH1 domain maps to 561–631 (PLPPSKEGGT…QNSPPLPILP (71 aa)). The span at 575 to 600 (LPPPPPLPSGGGVPPPPPPPPPPPLP) shows a compositional bias: pro residues. S624 carries the phosphoserine modification. The FH2 domain maps to 636 to 1034 (PKKEFKPEIS…EKRVRIAKEL (399 aa)). Residues 1013 to 1056 (KENIKKREAEEKEKRVRIAKELAERERLERQQKKKRLLEMKTEG) are a coiled coil. The 31-residue stretch at 1057 to 1087 (DETGVMDNLLEALQSGAAFRDRRKRTPMPKD) folds into the DAD domain. A phosphoserine mark is found at S1093 and S1179. A Nuclear export signal motif is present at residues 1184–1193 (EALLARLRAL).

Belongs to the formin homology family. Diaphanous subfamily. In terms of processing, ubiquitinated.

The protein localises to the cytoplasm. The protein resides in the nucleus. Actin nucleation and elongation factor required for the assembly of F-actin structures, such as actin cables and stress fibers. Required for cytokinesis, stress fiber formation and transcriptional activation of the serum response factor. Binds to GTP-bound form of Rho and to profilin: acts in a Rho-dependent manner to recruit profilin to the membrane, where it promotes actin polymerization. DFR proteins couple Rho and Src tyrosine kinase during signaling and the regulation of actin dynamics. Also acts as an actin nucleation and elongation factor in the nucleus by promoting nuclear actin polymerization inside the nucleus to drive serum-dependent SRF-MRTFA activity. This chain is Protein diaphanous homolog 3 (DIAPH3), found in Homo sapiens (Human).